We begin with the raw amino-acid sequence, 253 residues long: Ubiquinone/menaquinone biosynthesis C-methyltransferase UbiE (253 aa).

S-adenosyl-L-methionine-binding positions include threonine 76, aspartate 97, 125-126, and serine 142; that span reads NA.

Belongs to the class I-like SAM-binding methyltransferase superfamily. MenG/UbiE family.

The enzyme catalyses a 2-demethylmenaquinol + S-adenosyl-L-methionine = a menaquinol + S-adenosyl-L-homocysteine + H(+). It carries out the reaction a 2-methoxy-6-(all-trans-polyprenyl)benzene-1,4-diol + S-adenosyl-L-methionine = a 5-methoxy-2-methyl-3-(all-trans-polyprenyl)benzene-1,4-diol + S-adenosyl-L-homocysteine + H(+). It functions in the pathway quinol/quinone metabolism; menaquinone biosynthesis; menaquinol from 1,4-dihydroxy-2-naphthoate: step 2/2. Its pathway is cofactor biosynthesis; ubiquinone biosynthesis. Its function is as follows. Methyltransferase required for the conversion of demethylmenaquinol (DMKH2) to menaquinol (MKH2) and the conversion of 2-polyprenyl-6-methoxy-1,4-benzoquinol (DDMQH2) to 2-polyprenyl-3-methyl-6-methoxy-1,4-benzoquinol (DMQH2). This is Ubiquinone/menaquinone biosynthesis C-methyltransferase UbiE from Xylella fastidiosa (strain M12).